The following is a 132-amino-acid chain: Small ribosomal subunit protein uS8 (132 aa).

The protein belongs to the universal ribosomal protein uS8 family. As to quaternary structure, part of the 30S ribosomal subunit. Contacts proteins S5 and S12.

Its function is as follows. One of the primary rRNA binding proteins, it binds directly to 16S rRNA central domain where it helps coordinate assembly of the platform of the 30S subunit. The polypeptide is Small ribosomal subunit protein uS8 (Syntrophotalea carbinolica (strain DSM 2380 / NBRC 103641 / GraBd1) (Pelobacter carbinolicus)).